A 541-amino-acid polypeptide reads, in one-letter code: Tyrosine-protein kinase Yes (541 aa).

The segment covering 1 to 10 (MGCIKSKENK) has biased composition (basic and acidic residues). Positions 1 to 29 (MGCIKSKENKSPAIKYTPENPTEPVNTSA) are disordered. A lipid anchor (N-myristoyl glycine) is attached at Gly2. Cys3 carries S-palmitoyl cysteine; in membrane form lipidation. A compositionally biased stretch (polar residues) spans 19-29 (ENPTEPVNTSA). Tyr32 is modified (phosphotyrosine). Residues 89–150 (GGVTIFVALY…PSNYVAPADS (62 aa)) form the SH3 domain. Residues 156 to 253 (WYFGKMGRKD…GLCHKLTTVC (98 aa)) enclose the SH2 domain. The region spanning 275 to 528 (LRLEVKLGQG…YIQSFLEDYF (254 aa)) is the Protein kinase domain. ATP is bound by residues 281-289 (LGQGCFGEV) and Lys303. 2 positions are modified to phosphotyrosine: Tyr334 and Tyr343. Asp394 (proton acceptor) is an active-site residue. Tyr424 bears the Phosphotyrosine; by autocatalysis mark. Residue Tyr535 is modified to Phosphotyrosine.

Interacts with YAP1 and CSF1R. Interacts with FASLG. Interacts with CTNND1; this interaction allows YES1-mediated activation of FYN and FER and subsequent phosphorylation of CTNND1. Interacts with IL6ST/gp130. Interacts with SCRIB, when YES1 is in a closed conformation; the interaction facilitates YES1 autophosphorylation. In terms of processing, phosphorylated. Phosphorylation by CSK on the C-terminal tail maintains the enzyme in an inactive state. Autophosphorylation at Tyr-424 maintains enzyme activity by blocking CSK-mediated inhibition. Post-translationally, palmitoylation at Cys-3 promotes membrane localization.

It is found in the cell membrane. The protein localises to the cytoplasm. It localises to the cytoskeleton. The protein resides in the microtubule organizing center. Its subcellular location is the centrosome. It is found in the cytosol. The protein localises to the cell junction. The catalysed reaction is L-tyrosyl-[protein] + ATP = O-phospho-L-tyrosyl-[protein] + ADP + H(+). Functionally, non-receptor protein tyrosine kinase that is involved in the regulation of cell growth and survival, apoptosis, cell-cell adhesion, cytoskeleton remodeling, and differentiation. Stimulation by receptor tyrosine kinases (RTKs) including EGFR, PDGFR, CSF1R and FGFR leads to recruitment of YES1 to the phosphorylated receptor, and activation and phosphorylation of downstream substrates. Upon EGFR activation, promotes the phosphorylation of PARD3 to favor epithelial tight junction assembly. Participates in the phosphorylation of specific junctional components such as CTNND1 by stimulating the FYN and FER tyrosine kinases at cell-cell contacts. Upon T-cell stimulation by CXCL12, phosphorylates collapsin response mediator protein 2/DPYSL2 and induces T-cell migration. Participates in CD95L/FASLG signaling pathway and mediates AKT-mediated cell migration. Plays a role in cell cycle progression by phosphorylating the cyclin dependent kinase 4/CDK4 thus regulating the G1 phase. Also involved in G2/M progression and cytokinesis. Catalyzes phosphorylation of organic cation transporter OCT2 which induces its transport activity. This Rattus norvegicus (Rat) protein is Tyrosine-protein kinase Yes (Yes1).